The following is a 401-amino-acid chain: Imidazolonepropionase (401 aa).

Residues H66 and H68 each contribute to the Fe(3+) site. The Zn(2+) site is built by H66 and H68. 4-imidazolone-5-propanoate is bound by residues R75, Y138, and H171. Y138 lines the N-formimidoyl-L-glutamate pocket. Residue H236 coordinates Fe(3+). H236 lines the Zn(2+) pocket. Q239 is a 4-imidazolone-5-propanoate binding site. D311 is a binding site for Fe(3+). D311 provides a ligand contact to Zn(2+). Residues N313 and G315 each coordinate N-formimidoyl-L-glutamate. 4-imidazolone-5-propanoate is bound at residue T316.

It belongs to the metallo-dependent hydrolases superfamily. HutI family. Zn(2+) is required as a cofactor. The cofactor is Fe(3+).

It localises to the cytoplasm. The catalysed reaction is 4-imidazolone-5-propanoate + H2O = N-formimidoyl-L-glutamate. It participates in amino-acid degradation; L-histidine degradation into L-glutamate; N-formimidoyl-L-glutamate from L-histidine: step 3/3. In terms of biological role, catalyzes the hydrolytic cleavage of the carbon-nitrogen bond in imidazolone-5-propanoate to yield N-formimidoyl-L-glutamate. It is the third step in the universal histidine degradation pathway. This chain is Imidazolonepropionase, found in Acinetobacter baumannii (strain ACICU).